A 414-amino-acid chain; its full sequence is Esterase FrsA (414 aa).

It belongs to the FrsA family.

It carries out the reaction a carboxylic ester + H2O = an alcohol + a carboxylate + H(+). Its function is as follows. Catalyzes the hydrolysis of esters. The chain is Esterase FrsA from Escherichia coli O81 (strain ED1a).